The following is a 463-amino-acid chain: Membrane-bound lytic murein transglycosylase F (463 aa).

A signal peptide spans 1 to 33 (MQSQDYKKRLKLQIIIILSIAVMSCGVPNVPTA). The interval 34-272 (LSSLLERESI…VLEDKYFGHI (239 aa)) is non-LT domain. The interval 273–463 (RQFDYVDSRA…LVWLDEQGKI (191 aa)) is LT domain. Residue E317 is part of the active site.

It in the N-terminal section; belongs to the bacterial solute-binding protein 3 family. In the C-terminal section; belongs to the transglycosylase Slt family.

Its subcellular location is the cell outer membrane. It carries out the reaction Exolytic cleavage of the (1-&gt;4)-beta-glycosidic linkage between N-acetylmuramic acid (MurNAc) and N-acetylglucosamine (GlcNAc) residues in peptidoglycan, from either the reducing or the non-reducing ends of the peptidoglycan chains, with concomitant formation of a 1,6-anhydrobond in the MurNAc residue.. In terms of biological role, murein-degrading enzyme that degrades murein glycan strands and insoluble, high-molecular weight murein sacculi, with the concomitant formation of a 1,6-anhydromuramoyl product. Lytic transglycosylases (LTs) play an integral role in the metabolism of the peptidoglycan (PG) sacculus. Their lytic action creates space within the PG sacculus to allow for its expansion as well as for the insertion of various structures such as secretion systems and flagella. This chain is Membrane-bound lytic murein transglycosylase F, found in Alteromonas mediterranea (strain DSM 17117 / CIP 110805 / LMG 28347 / Deep ecotype).